A 584-amino-acid polypeptide reads, in one-letter code: Sulfite reductase [NADPH] hemoprotein beta-component (584 aa).

4 residues coordinate [4Fe-4S] cluster: Cys-447, Cys-453, Cys-492, and Cys-496. Cys-496 serves as a coordination point for siroheme.

This sequence belongs to the nitrite and sulfite reductase 4Fe-4S domain family. In terms of assembly, alpha(8)-beta(8). The alpha component is a flavoprotein, the beta component is a hemoprotein. Requires siroheme as cofactor. [4Fe-4S] cluster serves as cofactor.

The enzyme catalyses hydrogen sulfide + 3 NADP(+) + 3 H2O = sulfite + 3 NADPH + 4 H(+). It participates in sulfur metabolism; hydrogen sulfide biosynthesis; hydrogen sulfide from sulfite (NADPH route): step 1/1. Component of the sulfite reductase complex that catalyzes the 6-electron reduction of sulfite to sulfide. This is one of several activities required for the biosynthesis of L-cysteine from sulfate. The sequence is that of Sulfite reductase [NADPH] hemoprotein beta-component from Colwellia psychrerythraea (strain 34H / ATCC BAA-681) (Vibrio psychroerythus).